Consider the following 629-residue polypeptide: Hemocyanin C chain (629 aa).

Cu cation-binding residues include H175, H179, H206, H326, H330, and H366. N-linked (GlcNAc...) asparagine glycosylation occurs at N451. A disulfide bond links C537 and C585. A glycan (N-linked (GlcNAc...) asparagine) is linked at N618.

It belongs to the tyrosinase family. Hemocyanin subfamily. As to quaternary structure, tarantula hemocyanin is a 24-chain polymer with seven different chains identified. In terms of tissue distribution, hemolymph.

Its subcellular location is the secreted. It is found in the extracellular space. Hemocyanins are copper-containing oxygen carriers occurring freely dissolved in the hemolymph of many mollusks and arthropods. The protein is Hemocyanin C chain (HCC) of Aphonopelma sp. (American tarantula).